We begin with the raw amino-acid sequence, 402 residues long: MNTVYVVGTCDTKGGELRYLRDLIRQAGCDAVLVDVSVSEFHSQAADVDVQPSEVARFHPNPPKPEDLKDRGKAVAAMAQALVEFIRSRPDVDGIIGAGGTGGTALIAPALRALPIGTPKVLVSTVASGNVAPYVGPTDISMMYSVTDVSGLNRISRVVLANAAHSVAGMVLNKVSAAKDERPAIGLTMFGVTTPCVQAVTRALEADFDCLVFHATGTGGQSFEKLADSALLVGGIDVSTTEVCDYLVGGVFPCTADRFGAFARTRLPYVGSCGALDMVNFGAMDTVPSRFRSRRLHVHNPQVTLMRTTPEECNRIGEWIAERLNLCEGTVRFLIPELGVSAIDAPGQPFHDPEADSALFAALERTLRRTTKRQLIRVPLHINDPQFAELLVTNFKEALREH.

The protein belongs to the UPF0261 family.

This chain is UPF0261 protein y4oU, found in Sinorhizobium fredii (strain NBRC 101917 / NGR234).